The primary structure comprises 409 residues: 5-aminolevulinate synthase (409 aa).

Substrate contacts are provided by Arg21 and Ser136. Positions 188, 216, and 244 each coordinate pyridoxal 5'-phosphate. Lys247 is a catalytic residue. Lys247 is modified (N6-(pyridoxal phosphate)lysine). Pyridoxal 5'-phosphate contacts are provided by Thr276 and Thr277. Thr362 serves as a coordination point for substrate.

The protein belongs to the class-II pyridoxal-phosphate-dependent aminotransferase family. As to quaternary structure, homodimer. Pyridoxal 5'-phosphate serves as cofactor.

It catalyses the reaction succinyl-CoA + glycine + H(+) = 5-aminolevulinate + CO2 + CoA. The protein operates within porphyrin-containing compound metabolism; protoporphyrin-IX biosynthesis; 5-aminolevulinate from glycine: step 1/1. The protein is 5-aminolevulinate synthase (hemA) of Bradyrhizobium diazoefficiens (strain JCM 10833 / BCRC 13528 / IAM 13628 / NBRC 14792 / USDA 110).